The primary structure comprises 96 residues: Small, acid-soluble spore protein gamma-type (96 aa).

Polar residues predominate over residues 1–15 (MNTKNFTPQESRTNA). Positions 1–96 (MNTKNFTPQE…SEAKKRNNQQ (96 aa)) are disordered. A compositionally biased stretch (low complexity) spans 16–27 (QQVRQQNQQSAQ). Positions 28–41 (GTSSGFATEFASET) are enriched in polar residues. 2 consecutive repeats follow at residues 28 to 52 (GTSS…QNQQ) and 61 to 87 (GATA…NQQS). 2 stretches are compositionally biased toward low complexity: residues 42 to 57 (NAQQ…AQAN) and 76 to 86 (NVQQVRQQNQQ).

The protein belongs to the gamma-type SASP family.

SASP are proteins degraded in the first minutes of spore germination and provide amino acids for both new protein synthesis and metabolism. These proteins may be involved in dormant spore's high resistance to UV light. This Laceyella sacchari (Thermoactinomyces thalpophilus) protein is Small, acid-soluble spore protein gamma-type.